The primary structure comprises 212 residues: Neuroendocrine protein 7B2 (212 aa).

An N-terminal signal peptide occupies residues 1–26 (MVSRMVSTMLSGLLFWLASGWTPAFA). Cysteines 120 and 130 form a disulfide. 2 positions are modified to phosphoserine: Ser141 and Ser205. Positions 174–212 (GGERRKRRSVNPYLQGQRLDNVVAKKSVPHFSDEDKDPE) are disordered.

The protein belongs to the 7B2 family. As to quaternary structure, interacts with PCSK2/PC2 early in the secretory pathway. Dissociation occurs at later stages. Post-translationally, proteolytically cleaved in the Golgi by a furin-like convertase to generate bioactive peptides. Sulfated on tyrosine residues.

It is found in the secreted. Functionally, acts as a molecular chaperone for PCSK2/PC2, preventing its premature activation in the regulated secretory pathway. Binds to inactive PCSK2 in the endoplasmic reticulum and facilitates its transport from there to later compartments of the secretory pathway where it is proteolytically matured and activated. Also required for cleavage of PCSK2 but does not appear to be involved in its folding. Plays a role in regulating pituitary hormone secretion. The C-terminal peptide inhibits PCSK2 in vitro. The chain is Neuroendocrine protein 7B2 (SCG5) from Homo sapiens (Human).